A 174-amino-acid polypeptide reads, in one-letter code: Protein SHI RELATED SEQUENCE 3 (174 aa).

Zn(2+) is bound by residues cysteine 9, cysteine 12, cysteine 20, cysteine 25, cysteine 29, and cysteine 36. The zn(2)-C6 fungal-type; degenerate DNA-binding region spans 9–36 (CEDCGNQAKKDCVYMRCRTCCKSKAFHC). The Required for homo- and heterodimerization motif lies at 110–113 (IGGH).

It belongs to the SHI protein family.

The protein resides in the nucleus. Functionally, transcription activator that binds DNA on 5'-ACTCTAC-3' and promotes auxin homeostasis-regulating gene expression (e.g. YUC genes), as well as genes affecting stamen development, cell expansion and timing of flowering. Synergistically with other SHI-related proteins, regulates gynoecium, stamen and leaf development in a dose-dependent manner, controlling apical-basal patterning. Promotes style and stigma formation, and influences vascular development during gynoecium development. May also have a role in the formation and/or maintenance of the shoot apical meristem (SAM). The sequence is that of Protein SHI RELATED SEQUENCE 3 (SRS3) from Arabidopsis thaliana (Mouse-ear cress).